The following is a 198-amino-acid chain: IMP cyclohydrolase (198 aa).

This sequence belongs to the archaeal IMP cyclohydrolase family.

The catalysed reaction is IMP + H2O = 5-formamido-1-(5-phospho-D-ribosyl)imidazole-4-carboxamide. The protein operates within purine metabolism; IMP biosynthesis via de novo pathway; IMP from 5-formamido-1-(5-phospho-D-ribosyl)imidazole-4-carboxamide: step 1/1. Functionally, catalyzes the cyclization of 5-formylamidoimidazole-4-carboxamide ribonucleotide to IMP. This is IMP cyclohydrolase from Thermococcus kodakarensis (strain ATCC BAA-918 / JCM 12380 / KOD1) (Pyrococcus kodakaraensis (strain KOD1)).